Reading from the N-terminus, the 410-residue chain is Phosphoglycerate kinase (410 aa).

Residues Asp22–Asn24, Arg39, His62–Arg65, Arg119, and Arg159 contribute to the substrate site. Residues Glu332 and Gly358–Leu361 contribute to the ATP site.

Belongs to the phosphoglycerate kinase family. Homodimer.

It localises to the cytoplasm. The enzyme catalyses (2R)-3-phosphoglycerate + ATP = (2R)-3-phospho-glyceroyl phosphate + ADP. It participates in carbohydrate degradation; glycolysis; pyruvate from D-glyceraldehyde 3-phosphate: step 2/5. The sequence is that of Phosphoglycerate kinase (pgk) from Methanothermus fervidus (strain ATCC 43054 / DSM 2088 / JCM 10308 / V24 S).